A 280-amino-acid chain; its full sequence is MKQIALYGKGGIGKSTTSANLSAALVNRGLSVMQIGCDPKRDSTRMLMKGILIPTVLDLIRERGEENLTLDDVVFTGYKGVRCVEAGGPEPGVGCAGRGIIATFQLLERLSAFDEDIIVYDVLGDVVCGGFAMPMRKGYAQEIYLVTSGELMSLYAANNICKAISRISQNVRQVCRLGGVICNSRNLPDEEKLVGAFASEVGSKIIAYIPRSGLVQYAELNNQTVIEFAPDSSLSATYQSLAEEIMTNTDFVIPKPLEIEELEKLARSYLPTIDHQGINH.

Gly-8 to Ser-15 is an ATP binding site. [4Fe-4S] cluster is bound at residue Cys-95. Residue Arg-98 is modified to ADP-ribosylarginine; by dinitrogenase reductase ADP-ribosyltransferase. Cys-128 is a binding site for [4Fe-4S] cluster.

The protein belongs to the NifH/BchL/ChlL family. Homodimer. [4Fe-4S] cluster is required as a cofactor. The reversible ADP-ribosylation of Arg-98 inactivates the nitrogenase reductase and regulates nitrogenase activity.

It carries out the reaction N2 + 8 reduced [2Fe-2S]-[ferredoxin] + 16 ATP + 16 H2O = H2 + 8 oxidized [2Fe-2S]-[ferredoxin] + 2 NH4(+) + 16 ADP + 16 phosphate + 6 H(+). The key enzymatic reactions in nitrogen fixation are catalyzed by the nitrogenase complex, which has 2 components: the iron protein and the molybdenum-iron protein. This chain is Nitrogenase iron protein, found in Methanospirillum hungatei JF-1 (strain ATCC 27890 / DSM 864 / NBRC 100397 / JF-1).